We begin with the raw amino-acid sequence, 697 residues long: Histone deacetylase HOS3 (697 aa).

The histone deacetylase stretch occupies residues 40–440 (AKAVVVLSPY…LIGLQNQDWV (401 aa)). His-196 is a catalytic residue. Positions 525-573 (IRSHRSNASPEKELHENKPRSTEKQEQREIRSDTKVKQLSSNNRAAETQ) are disordered. Basic and acidic residues predominate over residues 534 to 560 (PEKELHENKPRSTEKQEQREIRSDTKV). Residues 561–573 (KQLSSNNRAAETQ) are compositionally biased toward polar residues. Residues Ser-582, Ser-583, Ser-613, and Ser-629 each carry the phosphoserine modification. A compositionally biased stretch (basic and acidic residues) spans 625 to 638 (GDEDSDHELKEKNW). Positions 625–697 (GDEDSDHELK…KHTTRSGGRW (73 aa)) are disordered. The span at 665–674 (QPQNANTPTY) shows a compositional bias: polar residues.

Belongs to the histone deacetylase family. HD type 1 subfamily. In terms of assembly, homodimer.

It is found in the nucleus. It carries out the reaction N(6)-acetyl-L-lysyl-[histone] + H2O = L-lysyl-[histone] + acetate. Responsible for the deacetylation of lysine residues on the N-terminal part of the core histones (H2A, H2B, H3 and H4). Histone deacetylation gives a tag for epigenetic repression and plays an important role in transcriptional regulation, cell cycle progression and developmental events. Histone deacetylases act via the formation of large multiprotein complexes. The chain is Histone deacetylase HOS3 (HOS3) from Saccharomyces cerevisiae (strain ATCC 204508 / S288c) (Baker's yeast).